The primary structure comprises 166 residues: Interferon gamma (166 aa).

The signal sequence occupies residues 1–23; it reads MKYTSSFLALLLSVLLGFSGSYG. Glutamine 24 carries the post-translational modification Pyrrolidone carboxylic acid. N-linked (GlcNAc...) asparagine glycans are attached at residues asparagine 39 and asparagine 106.

Belongs to the type II (or gamma) interferon family. Homodimer. Interacts with IFNGR1 (via extracellular domain); this interaction promotes IFNGR1 dimerization. Released primarily from activated T lymphocytes.

It is found in the secreted. In terms of biological role, type II interferon produced by immune cells such as T-cells and NK cells that plays crucial roles in antimicrobial, antiviral, and antitumor responses by activating effector immune cells and enhancing antigen presentation. Primarily signals through the JAK-STAT pathway after interaction with its receptor IFNGR1 to affect gene regulation. Upon IFNG binding, IFNGR1 intracellular domain opens out to allow association of downstream signaling components JAK2, JAK1 and STAT1, leading to STAT1 activation, nuclear translocation and transcription of IFNG-regulated genes. Many of the induced genes are transcription factors such as IRF1 that are able to further drive regulation of a next wave of transcription. Plays a role in class I antigen presentation pathway by inducing a replacement of catalytic proteasome subunits with immunoproteasome subunits. In turn, increases the quantity, quality, and repertoire of peptides for class I MHC loading. Increases the efficiency of peptide generation also by inducing the expression of activator PA28 that associates with the proteasome and alters its proteolytic cleavage preference. Up-regulates as well MHC II complexes on the cell surface by promoting expression of several key molecules such as cathepsins B/CTSB, H/CTSH, and L/CTSL. Participates in the regulation of hematopoietic stem cells during development and under homeostatic conditions by affecting their development, quiescence, and differentiation. This Capra hircus (Goat) protein is Interferon gamma (IFNG).